The chain runs to 208 residues: Large ribosomal subunit protein uL4 (208 aa).

Positions 45–77 (RQGTHKAKERAEIKGSTRKIKKQKGTGTARAGS) are disordered.

The protein belongs to the universal ribosomal protein uL4 family. In terms of assembly, part of the 50S ribosomal subunit.

Functionally, one of the primary rRNA binding proteins, this protein initially binds near the 5'-end of the 23S rRNA. It is important during the early stages of 50S assembly. It makes multiple contacts with different domains of the 23S rRNA in the assembled 50S subunit and ribosome. Forms part of the polypeptide exit tunnel. In Christiangramia forsetii (strain DSM 17595 / CGMCC 1.15422 / KT0803) (Gramella forsetii), this protein is Large ribosomal subunit protein uL4.